The chain runs to 68 residues: Large ribosomal subunit protein bL32 (68 aa).

The segment at 1–21 is disordered; that stretch reads MAVQQNKVSKSRRNNRRAHDS.

Belongs to the bacterial ribosomal protein bL32 family.

The polypeptide is Large ribosomal subunit protein bL32 (Roseobacter denitrificans (strain ATCC 33942 / OCh 114) (Erythrobacter sp. (strain OCh 114))).